Here is a 217-residue protein sequence, read N- to C-terminus: Salivary glue protein Sgs-3 (217 aa).

Positions 1–23 (MKLTIATVLASILLIGFANVANC) are cleaved as a signal peptide. Positions 45-130 (KSTSTTTTTT…KPTTHSTPKT (86 aa)) are enriched in low complexity. The disordered stretch occupies residues 45–163 (KSTSTTTTTT…KHTTPTTTTT (119 aa)). Over residues 131–154 (KPTKHTTPKTKPTKHTTPKTKPTK) the composition is skewed to basic residues.

The sequence is that of Salivary glue protein Sgs-3 (Sgs3) from Drosophila simulans (Fruit fly).